The primary structure comprises 211 residues: 3-demethoxyubiquinol 3-hydroxylase (211 aa).

Fe cation is bound by residues Glu60, Glu90, His93, Glu142, Glu174, and His177.

It belongs to the COQ7 family. Fe cation is required as a cofactor.

The protein localises to the cell membrane. It carries out the reaction a 5-methoxy-2-methyl-3-(all-trans-polyprenyl)benzene-1,4-diol + AH2 + O2 = a 3-demethylubiquinol + A + H2O. It participates in cofactor biosynthesis; ubiquinone biosynthesis. In terms of biological role, catalyzes the hydroxylation of 2-nonaprenyl-3-methyl-6-methoxy-1,4-benzoquinol during ubiquinone biosynthesis. The protein is 3-demethoxyubiquinol 3-hydroxylase of Acinetobacter baylyi (strain ATCC 33305 / BD413 / ADP1).